Consider the following 73-residue polypeptide: Large ribosomal subunit protein uL29 (73 aa).

This sequence belongs to the universal ribosomal protein uL29 family.

In Synechococcus sp. (strain JA-2-3B'a(2-13)) (Cyanobacteria bacterium Yellowstone B-Prime), this protein is Large ribosomal subunit protein uL29.